Here is a 211-residue protein sequence, read N- to C-terminus: Bifunctional transcriptional activator/DNA repair enzyme AdaA (211 aa).

Cys54 (nucleophile; methyl group acceptor from methylphosphotriester) is an active-site residue. 4 residues coordinate Zn(2+): Cys54, Cys58, Cys85, and Cys88. One can recognise an HTH araC/xylS-type domain in the interval 102-200; sequence DLITEYIDKN…GQTPARFRQM (99 aa). The segment at residues 119 to 140 is a DNA-binding region (H-T-H motif); it reads ESLADICHGSPYHMHRTFKKIK.

Zn(2+) is required as a cofactor.

It carries out the reaction (2'-deoxyribonucleoside 5'-methylphosphotriester)-DNA + L-cysteinyl-[protein] = 2'-deoxyribonucleotide-DNA + S-methyl-L-cysteinyl-[protein] + H(+). Its function is as follows. Is involved in the adaptive response to alkylation damage in DNA caused by alkylating agents. Repairs the methylphosphotriester lesions in DNA by a direct and irreversible transfer of the methyl group to one of its own cysteine residues. Functionally, the methylation of AdaA by methylphosphotriesters in DNA leads to its activation as a transcriptional regulator that activates the transcription of the ada operon which consists of adaA and adaB, and of the adjacent gene alkA. This is Bifunctional transcriptional activator/DNA repair enzyme AdaA (adaA) from Bacillus subtilis (strain 168).